The chain runs to 658 residues: Glycogen debranching enzyme (658 aa).

Asp-335 (nucleophile) is an active-site residue. The active-site Proton donor is Glu-370. Over residues Asn-457–Thr-468 the composition is skewed to basic and acidic residues. Residues Asn-457 to Leu-481 are disordered.

Belongs to the glycosyl hydrolase 13 family.

It catalyses the reaction Hydrolysis of (1-&gt;6)-alpha-D-glucosidic linkages to branches with degrees of polymerization of three or four glucose residues in limit dextrin.. It functions in the pathway glycan degradation; glycogen degradation. Removes maltotriose and maltotetraose chains that are attached by 1,6-alpha-linkage to the limit dextrin main chain, generating a debranched limit dextrin. The chain is Glycogen debranching enzyme from Pectobacterium atrosepticum (strain SCRI 1043 / ATCC BAA-672) (Erwinia carotovora subsp. atroseptica).